Reading from the N-terminus, the 188-residue chain is Ribosome-recycling factor (188 aa).

It belongs to the RRF family.

The protein localises to the cytoplasm. Responsible for the release of ribosomes from messenger RNA at the termination of protein biosynthesis. May increase the efficiency of translation by recycling ribosomes from one round of translation to another. The chain is Ribosome-recycling factor from Blochmanniella pennsylvanica (strain BPEN).